The primary structure comprises 140 residues: N14 matrix protein (140 aa).

Residues 1-25 (MACTLRLTIAALVLLGICHLSRPVA) form the signal peptide.

The protein belongs to the N16 matrix protein family. Heterooligomer; disulfide-linked. Pif97, Pif80, N16 and other proteins form a complex. In terms of tissue distribution, component of conchiolin, the organic matrix of nacre. Only expressed in the dorsal region of the mantle.

It is found in the secreted. The protein localises to the extracellular space. It localises to the extracellular matrix. In terms of biological role, may be specifically involved in the formation of the nacreous layer. This is N14 matrix protein from Pinctada maxima (Silver-lipped pearl oyster).